The primary structure comprises 335 residues: Atypical chemokine receptor 1 (335 aa).

Residues 1 to 62 (MGNCLHPAEL…CNLLDDSALP (62 aa)) lie on the Extracellular side of the membrane. N-linked (GlcNAc...) asparagine glycosylation is found at asparagine 16, asparagine 26, and asparagine 32. Intrachain disulfides connect cysteine 50/cysteine 275 and cysteine 128/cysteine 194. A helical transmembrane segment spans residues 63–83 (FFILVSVLGILASGTVLFMFF). The Cytoplasmic portion of the chain corresponds to 84–94 (RPLFHWQLCPG). The chain crosses the membrane as a helical span at residues 95–115 (WPVLAQLAVGSALFSIVVPIL). Residues 116–128 (APGLGNTRSSALC) lie on the Extracellular side of the membrane. Residues 129–152 (SLGYCVWYGSAFAQALLLGCHASL) traverse the membrane as a helical segment. Topologically, residues 153 to 165 (GPKLGAGQVPGLT) are cytoplasmic. A helical membrane pass occupies residues 166-186 (LGLSVGLWGVAALLTLPITLA). Residues 187 to 206 (SGASGGLCTPAYSMELKALQ) are Extracellular-facing. Residues 207 to 227 (ATHAVACLAVFVLLPLGLFGA) form a helical membrane-spanning segment. The Cytoplasmic segment spans residues 228–243 (KGLKKALGMGPGPWMN). The chain crosses the membrane as a helical span at residues 244–264 (ILWAWFIFWWPHGVVLGLDFL). Residues 265-286 (VRSKLLLLSTCLAQQALDLLLN) lie on the Extracellular side of the membrane. Residues 287 to 307 (LAEALAILHCVATPLLLALFC) traverse the membrane as a helical segment. Residues 308–335 (HQATRTLLPSLPLPEGWSSHLDTLGSES) lie on the Cytoplasmic side of the membrane.

It belongs to the G-protein coupled receptor 1 family. Atypical chemokine receptor subfamily. In terms of assembly, (Microbial infection) Interacts (via N-terminal extracellular domain) with Plasmodium knowlesi Duffy receptor alpha form (DBPalpha) (via region II).

It localises to the early endosome. Its subcellular location is the recycling endosome. The protein localises to the membrane. In terms of biological role, atypical chemokine receptor that controls chemokine levels and localization via high-affinity chemokine binding that is uncoupled from classic ligand-driven signal transduction cascades, resulting instead in chemokine sequestration, degradation, or transcytosis. Also known as interceptor (internalizing receptor) or chemokine-scavenging receptor or chemokine decoy receptor. Has a promiscuous chemokine-binding profile, interacting with inflammatory chemokines of both the CXC and the CC subfamilies but not with homeostatic chemokines. Acts as a receptor for chemokines including CCL2, CCL5, CCL7, CCL11, CCL13, CCL14, CCL17, CXCL5, CXCL6, IL8/CXCL8, CXCL11, GRO, RANTES, MCP-1 and TARC. May regulate chemokine bioavailability and, consequently, leukocyte recruitment through two distinct mechanisms: when expressed in endothelial cells, it sustains the abluminal to luminal transcytosis of tissue-derived chemokines and their subsequent presentation to circulating leukocytes; when expressed in erythrocytes, serves as blood reservoir of cognate chemokines but also as a chemokine sink, buffering potential surges in plasma chemokine levels. (Microbial infection) Acts as a receptor for the malaria parasite Plasmodium knowlesi. The chain is Atypical chemokine receptor 1 (ACKR1) from Macaca mulatta (Rhesus macaque).